The chain runs to 455 residues: Probable alpha-galactosidase B (455 aa).

The signal sequence occupies residues 1-16 (MIEFLALITLISRANA). Intrachain disulfides connect cysteine 39–cysteine 71 and cysteine 121–cysteine 151. An N-linked (GlcNAc...) asparagine glycan is attached at asparagine 42. Residue aspartate 149 is the Nucleophile of the active site. Asparagine 177 and asparagine 192 each carry an N-linked (GlcNAc...) asparagine glycan. 222–226 (NWGNA) provides a ligand contact to substrate. Aspartate 244 functions as the Proton donor in the catalytic mechanism. The N-linked (GlcNAc...) asparagine glycan is linked to asparagine 395.

This sequence belongs to the glycosyl hydrolase 27 family.

The protein localises to the secreted. It carries out the reaction Hydrolysis of terminal, non-reducing alpha-D-galactose residues in alpha-D-galactosides, including galactose oligosaccharides, galactomannans and galactolipids.. Its function is as follows. Hydrolyzes a variety of simple alpha-D-galactoside as well as more complex molecules such as oligosaccharides and polysaccharides. The protein is Probable alpha-galactosidase B (aglB) of Emericella nidulans (strain FGSC A4 / ATCC 38163 / CBS 112.46 / NRRL 194 / M139) (Aspergillus nidulans).